The sequence spans 271 residues: Norsolorinic acid ketoreductase (271 aa).

A disordered region spans residues 1–22 (MNGSLSQHDQERLSTPYRDGPP). NADP(+) is bound by residues isoleucine 36, asparagine 112, tyrosine 185, lysine 189, valine 216, and threonine 218. Tyrosine 185 functions as the Proton donor in the catalytic mechanism. Lysine 189 (lowers pKa of active site Tyr) is an active-site residue.

The protein belongs to the short-chain dehydrogenases/reductases (SDR) family.

The protein localises to the cytoplasm. Its subcellular location is the cytosol. The protein resides in the vacuole. The catalysed reaction is (1'S)-averantin + NADP(+) = norsolorinic acid + NADPH + H(+). The protein operates within mycotoxin biosynthesis; aflatoxin biosynthesis. Its function is as follows. Norsolorinic acid ketoreductase; part of the gene cluster that mediates the biosynthesis of aflatoxins, a group of polyketide-derived furanocoumarins, and part of the most toxic and carcinogenic compounds among the known mycotoxins. The four major aflatoxins produced by A.parasiticus are aflatoxin B1 (AFB1), aflatoxin B2 (AFB2), aflatoxin G1 (AFG1) and aflatoxin G2 (AFG2). Within the aflatoxin pathway, the norsolorinic acid ketoreductase aflD performs the second step by catalyzing the dehydration of norsolorinic acid (NOR) to form (1'S)-averantin (AVN). The biosynthesis of aflatoxins begins with the norsolorinic acid synthase aflC that combines a hexanoyl starter unit produced by the fatty acid synthase aflA/aflB and 7 malonyl-CoA extender units to synthesize the precursor NOR. The second step is the conversion of NOR to averantin and requires the norsolorinic acid ketoreductase aflD, which catalyzes the dehydration of norsolorinic acid to form (1'S)-averantin. The norsolorinic acid reductases aflE and aflF may also play a role in the conversion of NOR to AVN. The cytochrome P450 monooxygenase aflG then catalyzes the hydroxylation of AVN to 5'hydroxyaverantin (HAVN). The next step is performed by the 5'-hydroxyaverantin dehydrogenase aflH that transforms HAVN to 5'-oxoaverantin (OAVN) which is further converted to averufin (AVF) by aflK that plays a dual role in the pathway, as a 5'-oxoaverantin cyclase that mediates conversion of 5'-oxoaverantin, as well as a versicolorin B synthase in a later step in the pathway. The averufin oxidase aflI catalyzes the conversion of AVF to versiconal hemiacetal acetate (VHA). VHA is then the substrate for the versiconal hemiacetal acetate esterase aflJ to yield versiconal (VAL). Versicolorin B synthase aflK then converts VAL to versicolorin B (VERB) by closing the bisfuran ring of aflatoxin which is required for DNA-binding, thus giving to aflatoxin its activity as a mutagen. Then, the activity of the versicolorin B desaturase aflL leads to versicolorin A (VERA). A branch point starts from VERB since it can also be converted to dihydrodemethylsterigmatocystin (DMDHST), probably also by aflL, VERA being a precursor for aflatoxins B1 and G1, and DMDHST for aflatoxins B2 and G2. Next, the versicolorin reductase aflM and the cytochrome P450 monooxygenase aflN are involved in conversion of VERA to demethylsterigmatocystin (DMST). AflX and aflY seem also involved in this step, through probable aflX-mediated epoxide ring-opening step following versicolorin A oxidation and aflY-mediated Baeyer-Villiger oxidation required for the formation of the xanthone ring. The methyltransferase aflO then leads to the modification of DMST to sterigmatocystin (ST), and of DMDHST to dihydrosterigmatocystin (DHST). Both ST and DHST are then substrates of the O-methyltransferase aflP to yield O-methylsterigmatocystin (OMST) and dihydro-O-methylsterigmatocystin (DHOMST), respectively. Finally OMST is converted to aflatoxins B1 and G1, and DHOMST to aflatoxins B2 and G2, via the action of several enzymes including O-methylsterigmatocystin oxidoreductase aflQ, the cytochrome P450 monooxygenase aflU, but also the NADH-dependent flavin oxidoreductase nadA which is specifically required for the synthesis of AFG1. The polypeptide is Norsolorinic acid ketoreductase (Aspergillus parasiticus (strain ATCC 56775 / NRRL 5862 / SRRC 143 / SU-1)).